Reading from the N-terminus, the 254-residue chain is Ribosomal RNA large subunit methyltransferase E (254 aa).

The tract at residues 1–28 (MTTPPRGPDGRPLKVRVKKSRGRTTSSQ) is disordered. Basic residues predominate over residues 13–22 (LKVRVKKSRG). The S-adenosyl-L-methionine site is built by Gly-80, Trp-82, Asp-103, Asp-119, and Asp-143. The Proton acceptor role is filled by Lys-183. Residues 231–254 (DRAETDDAGTDGTGTAEAQAPRDQ) are disordered.

It belongs to the class I-like SAM-binding methyltransferase superfamily. RNA methyltransferase RlmE family.

The protein resides in the cytoplasm. The enzyme catalyses uridine(2552) in 23S rRNA + S-adenosyl-L-methionine = 2'-O-methyluridine(2552) in 23S rRNA + S-adenosyl-L-homocysteine + H(+). In terms of biological role, specifically methylates the uridine in position 2552 of 23S rRNA at the 2'-O position of the ribose in the fully assembled 50S ribosomal subunit. The polypeptide is Ribosomal RNA large subunit methyltransferase E (Xanthobacter autotrophicus (strain ATCC BAA-1158 / Py2)).